A 283-amino-acid polypeptide reads, in one-letter code: MTNMGAIRAALYRRRWLLSRRVVQMFIVLAFLVDWPEVGRIAHGNLSSSLWLGVLPLTDPFIALQSLFSGTMLAKTALVGTVIVAGFYFLFGGRIYCSWVCPINMVTDLAYWLRQKLNLKGNMTMSRELRMAVLGMSLILTVLSGTLAWENFNPITLFQRELMWTSVAGSMVLLSLFLFDLLITRRGWCGHLCPVGAFYAVLGRYGRLRVTAEQSGSCAGCGSCIRVCPEPHVLAPVVSLKANTVTHGDCTRCGACLDQCATGALAMKLDLGKSFRGIPIVRK.

4Fe-4S ferredoxin-type domains follow at residues L208–S239 and K241–D270. [4Fe-4S] cluster is bound by residues C218, C221, C224, C228, C250, C253, C256, and C260.

It functions in the pathway one-carbon metabolism; methylamine degradation. Its function is as follows. Involved in electron transfer. This chain is Methylamine utilization ferredoxin-type protein MauN (mauN), found in Methylobacillus flagellatus (strain ATCC 51484 / DSM 6875 / VKM B-1610 / KT).